Here is a 507-residue protein sequence, read N- to C-terminus: Probable cytosol aminopeptidase (507 aa).

The Mn(2+) site is built by Lys275 and Asp280. Lys287 is a catalytic residue. Residues Asp298, Asp357, and Glu359 each contribute to the Mn(2+) site. The active site involves Arg361.

It belongs to the peptidase M17 family. The cofactor is Mn(2+).

It localises to the cytoplasm. It catalyses the reaction Release of an N-terminal amino acid, Xaa-|-Yaa-, in which Xaa is preferably Leu, but may be other amino acids including Pro although not Arg or Lys, and Yaa may be Pro. Amino acid amides and methyl esters are also readily hydrolyzed, but rates on arylamides are exceedingly low.. The catalysed reaction is Release of an N-terminal amino acid, preferentially leucine, but not glutamic or aspartic acids.. Functionally, presumably involved in the processing and regular turnover of intracellular proteins. Catalyzes the removal of unsubstituted N-terminal amino acids from various peptides. This is Probable cytosol aminopeptidase from Acidobacterium capsulatum (strain ATCC 51196 / DSM 11244 / BCRC 80197 / JCM 7670 / NBRC 15755 / NCIMB 13165 / 161).